A 430-amino-acid polypeptide reads, in one-letter code: Trigger factor (430 aa).

The PPIase FKBP-type domain maps to 163-248 (GNIAIIDFKG…IKDIKVKELP (86 aa)).

It belongs to the FKBP-type PPIase family. Tig subfamily.

It is found in the cytoplasm. The catalysed reaction is [protein]-peptidylproline (omega=180) = [protein]-peptidylproline (omega=0). Functionally, involved in protein export. Acts as a chaperone by maintaining the newly synthesized protein in an open conformation. Functions as a peptidyl-prolyl cis-trans isomerase. The protein is Trigger factor of Clostridium botulinum (strain Langeland / NCTC 10281 / Type F).